The following is a 296-amino-acid chain: GTPase Era (296 aa).

The Era-type G domain occupies 7–174; that stretch reads HCGFVAIVGR…LDQVRPHLPE (168 aa). Residues 15–22 form a G1 region; the sequence is GRPNVGKS. GTP is bound at residue 15 to 22; sequence GRPNVGKS. A G2 region spans residues 41-45; the sequence is QTTRH. The tract at residues 62 to 65 is G3; it reads DTPG. Residues 62–66 and 123–126 contribute to the GTP site; these read DTPGF and NKLD. The tract at residues 123-126 is G4; that stretch reads NKLD. Residues 153–155 are G5; that stretch reads VSA. Positions 205 to 281 constitute a KH type-2 domain; the sequence is LGEELPYEMN…FLQVWVKVKS (77 aa).

It belongs to the TRAFAC class TrmE-Era-EngA-EngB-Septin-like GTPase superfamily. Era GTPase family. In terms of assembly, monomer.

It is found in the cytoplasm. The protein resides in the cell inner membrane. Its function is as follows. An essential GTPase that binds both GDP and GTP, with rapid nucleotide exchange. Plays a role in 16S rRNA processing and 30S ribosomal subunit biogenesis and possibly also in cell cycle regulation and energy metabolism. This is GTPase Era from Chromobacterium violaceum (strain ATCC 12472 / DSM 30191 / JCM 1249 / CCUG 213 / NBRC 12614 / NCIMB 9131 / NCTC 9757 / MK).